A 525-amino-acid polypeptide reads, in one-letter code: Exoglucanase 1 (525 aa).

Positions 1-18 (MRTAKFATLAALVASAAA) are cleaved as a signal peptide. A catalytic region spans residues 19 to 467 (QQACSLTTER…AGNGGNNGGN (449 aa)). The Nucleophile role is filled by E231. E236 acts as the Proton donor in catalysis. Residue N289 is glycosylated (N-linked (GlcNAc...) asparagine). The tract at residues 454–492 (GLPGAGNGGNNGGNPPPPTTTTSSAPATTTTASAGPKAG) is disordered. The segment covering 456–465 (PGAGNGGNNG) has biased composition (gly residues). The interval 468–489 (PPPPTTTTSSAPATTTTASAGP) is linker. Residues 473–489 (TTTSSAPATTTTASAGP) are compositionally biased toward low complexity. Positions 489–525 (PKAGRWQQCGGIGFTGPTQCEEPYICTKLNDWYSQCL) constitute a CBM1 domain. 2 disulfides stabilise this stretch: C497–C514 and C508–C524.

This sequence belongs to the glycosyl hydrolase 7 (cellulase C) family.

It carries out the reaction Hydrolysis of (1-&gt;4)-beta-D-glucosidic linkages in cellulose and cellotetraose, releasing cellobiose from the non-reducing ends of the chains.. The biological conversion of cellulose to glucose generally requires three types of hydrolytic enzymes: (1) Endoglucanases which cut internal beta-1,4-glucosidic bonds; (2) Exocellobiohydrolases that cut the disaccharide cellobiose from the non-reducing end of the cellulose polymer chain; (3) Beta-1,4-glucosidases which hydrolyze the cellobiose and other short cello-oligosaccharides to glucose. This is Exoglucanase 1 (CBH-1) from Humicola insolens (Soft-rot fungus).